Consider the following 751-residue polypeptide: Ribosomal RNA large subunit methyltransferase K/L (751 aa).

The THUMP domain maps to 44-155 (LAYRTCLWSR…KNKLVLSIDL (112 aa)).

This sequence belongs to the methyltransferase superfamily. RlmKL family.

It localises to the cytoplasm. The enzyme catalyses guanosine(2445) in 23S rRNA + S-adenosyl-L-methionine = N(2)-methylguanosine(2445) in 23S rRNA + S-adenosyl-L-homocysteine + H(+). The catalysed reaction is guanosine(2069) in 23S rRNA + S-adenosyl-L-methionine = N(2)-methylguanosine(2069) in 23S rRNA + S-adenosyl-L-homocysteine + H(+). Functionally, specifically methylates the guanine in position 2445 (m2G2445) and the guanine in position 2069 (m7G2069) of 23S rRNA. This Cellvibrio japonicus (strain Ueda107) (Pseudomonas fluorescens subsp. cellulosa) protein is Ribosomal RNA large subunit methyltransferase K/L.